The chain runs to 266 residues: Single-stranded DNA-binding protein WHY1, chloroplastic (266 aa).

The transit peptide at 1 to 37 (MPPPAPLFLSLASTPPPALMPVHHPRAPQSLTLVPPV) directs the protein to the chloroplast. A disordered region spans residues 53–81 (SPRHSDYFDPRAPPPPRGDGGYGRPPNGA). The required for ssDNA binding stretch occupies residues 94–99 (KGKAAL). Positions 172–185 (KGRSEEGKVRKVLK) match the Nuclear localization signal motif.

This sequence belongs to the Whirly family. As to quaternary structure, homotetramer.

The protein localises to the plastid. It localises to the chloroplast stroma. Its subcellular location is the nucleus. In terms of biological role, single-stranded DNA and RNA binding protein that maintains plastid genome stability by preventing break-induced and short homology-dependent illegitimate recombinations. Functions in RNA metabolism and is involved in the maturation of the atpF and 23S ribosomal RNAs. In Zea mays (Maize), this protein is Single-stranded DNA-binding protein WHY1, chloroplastic (WHY1).